We begin with the raw amino-acid sequence, 292 residues long: 4-hydroxybenzoate octaprenyltransferase (292 aa).

The next 8 membrane-spanning stretches (helical) occupy residues 23–43 (PIGI…AGEG), 47–67 (PGVA…GCVI), 98–118 (LILF…MNWL), 141–161 (HLPQ…TFAA), 164–184 (GSIP…ALIY), 211–231 (YDRE…AGIG), 233–253 (YLGL…FSVY), and 270–290 (FLNN…DYLW).

The protein belongs to the UbiA prenyltransferase family. Mg(2+) is required as a cofactor.

The protein localises to the cell inner membrane. It catalyses the reaction all-trans-octaprenyl diphosphate + 4-hydroxybenzoate = 4-hydroxy-3-(all-trans-octaprenyl)benzoate + diphosphate. It functions in the pathway cofactor biosynthesis; ubiquinone biosynthesis. In terms of biological role, catalyzes the prenylation of para-hydroxybenzoate (PHB) with an all-trans polyprenyl group. Mediates the second step in the final reaction sequence of ubiquinone-8 (UQ-8) biosynthesis, which is the condensation of the polyisoprenoid side chain with PHB, generating the first membrane-bound Q intermediate 3-octaprenyl-4-hydroxybenzoate. In Methylococcus capsulatus (strain ATCC 33009 / NCIMB 11132 / Bath), this protein is 4-hydroxybenzoate octaprenyltransferase.